Consider the following 421-residue polypeptide: MASAKEISQYLKRFSQLDAKRFAVVKVGGAVLRDDVDALTSSLSFLQEVGLTPIVLHGAGPQLDEELTAVGIQKKTVNGFRVTLPETMAIVRKVFHATNLQLIEALQRNGARATSITGGVFEAHYLDQETYGLVGGISAVNIAPIEASLRAASIPVIASLGETPSGQILNINADVAANELVHVLQPYKIIFLTGTGGLLDADGKIINSINLSTEYEQLIQQPWVYGGMKLKIEQIKHLLDRLPLESSVSITRPADLAKELFTHKGSGTLIRRGERVIRATTWKDLDLPRLQHLIQSSFRRTLIPHYFETTPLLRAYVSENYRAAVILTKLGNVPYLDKFAVLDDAQGEGLGRAVWSIMREETPQLFWRSRHNNQANAFYYAESDGYYKQDHWKIFWNGLHHFQQIQQCVAHCTQHPPTLID.

The acetylglutamate kinase stretch occupies residues 1–252 (MASAKEISQY…PLESSVSITR (252 aa)). Residues 59–60 (AG), R81, and N170 each bind substrate. The region spanning 274–420 (ERVIRATTWK…HCTQHPPTLI (147 aa)) is the N-acetyltransferase domain.

This sequence in the N-terminal section; belongs to the acetylglutamate kinase family. ArgB subfamily.

Its subcellular location is the cytoplasm. It catalyses the reaction N-acetyl-L-glutamate + ATP = N-acetyl-L-glutamyl 5-phosphate + ADP. It participates in amino-acid biosynthesis; L-arginine biosynthesis; N(2)-acetyl-L-ornithine from L-glutamate: step 2/4. This is Acetylglutamate kinase (argB) from Xylella fastidiosa (strain Temecula1 / ATCC 700964).